A 249-amino-acid chain; its full sequence is Carbohydrate deacetylase (249 aa).

His60 and His125 together coordinate Mg(2+).

The protein belongs to the YdjC deacetylase family. Homodimer. It depends on Mg(2+) as a cofactor.

Functionally, probably catalyzes the deacetylation of acetylated carbohydrates an important step in the degradation of oligosaccharides. The polypeptide is Carbohydrate deacetylase (Thermoanaerobacter pseudethanolicus (strain ATCC 33223 / 39E) (Clostridium thermohydrosulfuricum)).